Reading from the N-terminus, the 252-residue chain is Ubiquinone biosynthesis protein COQ4 homolog 2, mitochondrial (252 aa).

Zn(2+) contacts are provided by His-130, Asp-131, His-134, and Glu-146.

It belongs to the COQ4 family. In terms of assembly, component of a multi-subunit COQ enzyme complex. The cofactor is Zn(2+).

It is found in the mitochondrion inner membrane. The enzyme catalyses a 4-hydroxy-3-methoxy-5-(all-trans-polyprenyl)benzoate + H(+) = a 2-methoxy-6-(all-trans-polyprenyl)phenol + CO2. The protein operates within cofactor biosynthesis; ubiquinone biosynthesis. In terms of biological role, lyase that catalyzes the C1-decarboxylation of 4-hydroxy-3-methoxy-5-(all-trans-polyprenyl)benzoic acid into 2-methoxy-6-(all-trans-polyprenyl)phenol during ubiquinone biosynthesis. The sequence is that of Ubiquinone biosynthesis protein COQ4 homolog 2, mitochondrial from Trypanosoma cruzi (strain CL Brener).